A 301-amino-acid polypeptide reads, in one-letter code: tRNA-cytidine(32) 2-sulfurtransferase (301 aa).

The PP-loop motif motif lies at 55-60 (SGGKDS). [4Fe-4S] cluster contacts are provided by C130, C133, and C221.

It belongs to the TtcA family. Homodimer. The cofactor is Mg(2+). [4Fe-4S] cluster serves as cofactor.

The protein localises to the cytoplasm. The enzyme catalyses cytidine(32) in tRNA + S-sulfanyl-L-cysteinyl-[cysteine desulfurase] + AH2 + ATP = 2-thiocytidine(32) in tRNA + L-cysteinyl-[cysteine desulfurase] + A + AMP + diphosphate + H(+). It participates in tRNA modification. Catalyzes the ATP-dependent 2-thiolation of cytidine in position 32 of tRNA, to form 2-thiocytidine (s(2)C32). The sulfur atoms are provided by the cysteine/cysteine desulfurase (IscS) system. The polypeptide is tRNA-cytidine(32) 2-sulfurtransferase (Acinetobacter baylyi (strain ATCC 33305 / BD413 / ADP1)).